A 502-amino-acid chain; its full sequence is Tubulin gamma chain (502 aa).

Residues Glu-51–Pro-68 show a composition bias toward polar residues. A disordered region spans residues Glu-51 to Arg-73. Ala-169–Gly-175 provides a ligand contact to GTP. The span at Asp-473–Asp-482 shows a compositional bias: acidic residues. The segment at Asp-473–Ile-502 is disordered.

This sequence belongs to the tubulin family.

It localises to the cytoplasm. The protein resides in the cytoskeleton. Its subcellular location is the microtubule organizing center. It is found in the spindle pole body. Its function is as follows. Tubulin is the major constituent of microtubules. The gamma chain is found at microtubule organizing centers (MTOC) such as the spindle poles or the centrosome, suggesting that it is involved in the minus-end nucleation of microtubule assembly. This is Tubulin gamma chain (TUB4) from Candida albicans (Yeast).